Here is a 181-residue protein sequence, read N- to C-terminus: ADP-ribosylation factor 2 (181 aa).

The N-myristoyl glycine moiety is linked to residue G2. Residues G24–T31, D67–Q71, and N126–D129 each bind GTP.

It belongs to the small GTPase superfamily. Arf family.

The protein resides in the golgi apparatus. In terms of biological role, GTP-binding protein that functions as an allosteric activator of the cholera toxin catalytic subunit, an ADP-ribosyltransferase. Involved in protein trafficking; may modulate vesicle budding and uncoating within the Golgi apparatus. This chain is ADP-ribosylation factor 2 (ARF2), found in Bos taurus (Bovine).